The sequence spans 280 residues: Protease HtpX (280 aa).

Transmembrane regions (helical) follow at residues 7–26 (TFILLASLTALLVVIGGLLG) and 30–49 (GMLVALLFAGIMNFSAYWYS). Histidine 129 lines the Zn(2+) pocket. The active site involves glutamate 130. Histidine 133 is a binding site for Zn(2+). Helical transmembrane passes span 146-166 (ATIAGAISGIANMFMWLSMFG) and 178-198 (VVGMIMMIVAPLAAGLIQMAI). Residue glutamate 203 coordinates Zn(2+).

Belongs to the peptidase M48B family. Requires Zn(2+) as cofactor.

It is found in the cell inner membrane. The polypeptide is Protease HtpX (Legionella pneumophila (strain Lens)).